We begin with the raw amino-acid sequence, 630 residues long: tRNA uridine 5-carboxymethylaminomethyl modification enzyme MnmG (630 aa).

FAD is bound at residue 13–18 (GGGHAG). 273–287 (GPRYCPSIEDKIHRF) is a binding site for NAD(+).

Belongs to the MnmG family. As to quaternary structure, homodimer. Heterotetramer of two MnmE and two MnmG subunits. The cofactor is FAD.

It localises to the cytoplasm. NAD-binding protein involved in the addition of a carboxymethylaminomethyl (cmnm) group at the wobble position (U34) of certain tRNAs, forming tRNA-cmnm(5)s(2)U34. The sequence is that of tRNA uridine 5-carboxymethylaminomethyl modification enzyme MnmG from Pseudomonas putida (strain GB-1).